The following is a 500-amino-acid chain: Na(+)/H(+) antiporter NhaB (500 aa).

The next 11 helical transmembrane spans lie at F13–P33, I34–F54, C62–S82, I97–I117, I129–L149, F242–I262, G306–V326, F350–I370, P392–A412, V449–L469, and M477–T497.

Belongs to the NhaB Na(+)/H(+) (TC 2.A.34) antiporter family.

It is found in the cell inner membrane. It catalyses the reaction 2 Na(+)(in) + 3 H(+)(out) = 2 Na(+)(out) + 3 H(+)(in). Functionally, na(+)/H(+) antiporter that extrudes sodium in exchange for external protons. In Marinomonas sp. (strain MWYL1), this protein is Na(+)/H(+) antiporter NhaB.